Here is a 244-residue protein sequence, read N- to C-terminus: MANHETIFDQLKKQIPVDEEEPLILNRDSSVGLVIVDVVNGFCTIGSGNMAPTKHNEQISKMVEESAKLAREFCDRKWPVLAFIDSHHPDIPERPYPPHCIIGTEESELVPALKWLESEDCATLRRKDCINGFVGSMESDGSNVFVDWVKEKQIKVIVVVGICTDICVFDFVATALSARNHGVLSPVEDVVVYSRGCATFDLPLHVAKDIKGAQAHPQELMHHVGLYMAKGRGAQVVSKISFET.

The protein belongs to the isochorismatase family. Expressed in roots and stems, and at lower levels in flowers, siliques and leaves.

The enzyme catalyses nicotinamide + H2O = nicotinate + NH4(+). Its pathway is cofactor biosynthesis; nicotinate biosynthesis; nicotinate from nicotinamide: step 1/1. In terms of biological role, catalyzes the deamidation of nicotinamide, an early step in the NAD(+) salvage pathway. Prevents the accumulation of intracellular nicotinamide, a known inhibitor of poly(ADP-ribose) polymerases (PARP enzymes). This chain is Nicotinamidase 1, found in Arabidopsis thaliana (Mouse-ear cress).